Here is a 448-residue protein sequence, read N- to C-terminus: Protein chibby homolog 2 (448 aa).

8 positions are modified to phosphoserine: serine 41, serine 86, serine 89, serine 97, serine 124, serine 144, serine 148, and serine 150. Residues 164–198 (KECMLQEENKSLREENKALREENRMLSKENKILQV) adopt a coiled-coil conformation. 2 positions are modified to phosphoserine: serine 212 and serine 225. Residues 242 to 267 (KEDSTLQLLREENRALQQLLEQKQAY) are a coiled coil. Residues 270-323 (QAEDTAAPAEESKPAPSPHEEPCSPGLLQDQGSGLSSRFEEPKGPPARQEDSKE) form a disordered region. Basic and acidic residues-rich tracts occupy residues 279–291 (EESK…HEEP) and 307–323 (RFEE…DSKE). A phosphoserine mark is found at serine 335 and serine 338. Residues 356-414 (LQLLREMRQALQALLKENRLLQEENRTLQVLRAEHRGFQEENKALWENNKLKLQQKLVI) adopt a coiled-coil conformation.

The protein belongs to the chibby family. SPERT subfamily. As to quaternary structure, homodimer. Binds to NEK1. As to expression, testis-specific.

This is Protein chibby homolog 2 from Homo sapiens (Human).